We begin with the raw amino-acid sequence, 789 residues long: MPSSFFFEDASDDELELIRNQEDSSEEDVKEGEAEEHEAGEDEDGEEEYEEEDDDEEEEDEKRKRDADAQSPWDFASYSSSVGEEHARRHTTSIDEKISKAIQHRPVPISINEEEEEEEEEEDASDAETDKQEEYLSEDDEAAEYKPEDATPKPFFSTVDGVSFHADTFMELNLSRPLLRACETLGYKKPTPIQAACIPLALTGRDLCASAITGSGKTAAFALPTLERLLFRPKRVFATRVLILTPTRELAVQIHSMIQNLAQFTDIKCGLIVGGLSVREQEVVLRSMPDIVVATPGRMIDHLRNSMSVDLDDLAVLILDEADRLLQTGFATEITELVRLCPKRRQTMLFSATMTEEVKELVKLSLNKPLRLSADPSARRPPGLTEEVVRIRRTREANQEAVLLSLCTRTFKSKVIIFSGTKQAAHRLKILFGLAGLKAAELHGNLTQAQRLDSLELFRKQEVDFLIATDVAARGLDIIGVQTVINYACPREIDSYVHRVGRTARAGREGYAVTFVTDSDRSLLKVIAKKVGSKLKSRVIPEQSIVKWSQIIDEMEDQYSAVISAERDERALRKAEMEFAKAENMLEHRDEIYARPKRTWFMTEKEKKLVAQAEKDSAGNPAGGELVSADRAEDLKMKEKRKREREKNLPRKKRRKLEAAREMLEDNEGEEEEEDEEGDEKRGRSRGKDKKKQETDKKGLTLKDLGYMRAKAVKAKQRAIDSGKMERPKPDKKQSRSKPRNQPRGEEMKDLFKSDMGEKKQGRGGAAAAAKPRTKSKNSFKSKARYKRR.

Residues 1–152 (MPSSFFFEDA…AEYKPEDATP (152 aa)) are disordered. A coiled-coil region spans residues 13-66 (DELELIRNQEDSSEEDVKEGEAEEHEAGEDEDGEEEYEEEDDDEEEEDEKRKRD). Residues 23–60 (DSSEEDVKEGEAEEHEAGEDEDGEEEYEEEDDDEEEED) show a composition bias toward acidic residues. The segment covering 83-99 (GEEHARRHTTSIDEKIS) has biased composition (basic and acidic residues). A coiled-coil region spans residues 110-135 (SINEEEEEEEEEEDASDAETDKQEEY). Acidic residues predominate over residues 112 to 127 (NEEEEEEEEEEDASDA). The short motif at 167 to 195 (DTFMELNLSRPLLRACETLGYKKPTPIQA) is the Q motif element. The region spanning 198 to 372 (IPLALTGRDL…KLSLNKPLRL (175 aa)) is the Helicase ATP-binding domain. 211–218 (AITGSGKT) is an ATP binding site. The DEAD box motif lies at 320–323 (DEAD). In terms of domain architecture, Helicase C-terminal spans 402 to 546 (VLLSLCTRTF…SRVIPEQSIV (145 aa)). Coiled coils occupy residues 563–591 (ISAE…HRDE) and 628–677 (SADR…EDEE). The segment at 611-789 (AQAEKDSAGN…FKSKARYKRR (179 aa)) is disordered. Over residues 628 to 637 (SADRAEDLKM) the composition is skewed to basic and acidic residues. The span at 638–656 (KEKRKREREKNLPRKKRRK) shows a compositional bias: basic residues. Acidic residues predominate over residues 665 to 678 (EDNEGEEEEEDEEG). 3 stretches are compositionally biased toward basic and acidic residues: residues 691 to 701 (KKQETDKKGLT), 718 to 734 (RAID…DKKQ), and 743 to 761 (PRGE…EKKQ). Residues 772-789 (PRTKSKNSFKSKARYKRR) are compositionally biased toward basic residues.

It belongs to the DEAD box helicase family. DDX27/DRS1 subfamily.

It carries out the reaction ATP + H2O = ADP + phosphate + H(+). This chain is DEAD-box ATP-dependent RNA helicase 28 (RH28), found in Arabidopsis thaliana (Mouse-ear cress).